A 254-amino-acid chain; its full sequence is Type III pantothenate kinase (254 aa).

6–13 lines the ATP pocket; the sequence is DVGNSNIV. Substrate-binding positions include Tyr-100 and 107-110; that span reads GADR. Asp-109 (proton acceptor) is an active-site residue. Asp-129 contributes to the K(+) binding site. Thr-132 is a binding site for ATP. Thr-184 is a substrate binding site.

It belongs to the type III pantothenate kinase family. Homodimer. Requires NH4(+) as cofactor. It depends on K(+) as a cofactor.

It is found in the cytoplasm. It carries out the reaction (R)-pantothenate + ATP = (R)-4'-phosphopantothenate + ADP + H(+). It participates in cofactor biosynthesis; coenzyme A biosynthesis; CoA from (R)-pantothenate: step 1/5. In terms of biological role, catalyzes the phosphorylation of pantothenate (Pan), the first step in CoA biosynthesis. In Geobacter sp. (strain M21), this protein is Type III pantothenate kinase.